The sequence spans 176 residues: ATP-dependent protease subunit HslV (176 aa).

The active site involves Thr-4. Na(+) contacts are provided by Gly-158, Cys-161, and Thr-164.

Belongs to the peptidase T1B family. HslV subfamily. A double ring-shaped homohexamer of HslV is capped on each side by a ring-shaped HslU homohexamer. The assembly of the HslU/HslV complex is dependent on binding of ATP.

It localises to the cytoplasm. The catalysed reaction is ATP-dependent cleavage of peptide bonds with broad specificity.. Its activity is regulated as follows. Allosterically activated by HslU binding. Its function is as follows. Protease subunit of a proteasome-like degradation complex believed to be a general protein degrading machinery. The chain is ATP-dependent protease subunit HslV from Rhizobium meliloti (strain 1021) (Ensifer meliloti).